Here is an 870-residue protein sequence, read N- to C-terminus: Elastin (870 aa).

The first 27 residues, 1–27 (MAGLTAAVPQPGVLLILLLNLLHPAQP), serve as a signal peptide directing secretion. Proline 39 and proline 75 each carry 4-hydroxyproline. Proline 87 carries the hydroxyproline modification. Proline 105 bears the 4-hydroxyproline mark. Lysine 122 and lysine 126 each carry allysine. A 4-hydroxyproline mark is found at proline 207, proline 220, proline 223, and proline 244. 2 positions are modified to allysine: lysine 290 and lysine 309. Position 338 is a 4-hydroxyproline (proline 338). Allysine occurs at positions 360 and 363. Proline 375 carries the post-translational modification Hydroxyproline. A 4-hydroxyproline mark is found at proline 402 and proline 408. Hydroxyproline occurs at positions 413 and 418. An allysine mark is found at lysine 434, lysine 438, lysine 441, lysine 485, and lysine 488. 4-hydroxyproline is present on residues proline 518 and proline 539. An allysine mark is found at lysine 554, lysine 558, lysine 615, lysine 619, and lysine 623. 4 positions are modified to 4-hydroxyproline: proline 637, proline 646, proline 662, and proline 670. Allysine occurs at positions 677 and 680. The residue at position 715 (proline 715) is a 4-hydroxyproline. An allysine mark is found at lysine 730, lysine 734, lysine 793, and lysine 796. Proline 842 is modified (4-hydroxyproline). An intrachain disulfide couples cysteine 860 to cysteine 865.

Belongs to the elastin family. As to quaternary structure, the polymeric elastin chains are cross-linked together into an extensible 3D network. Forms a ternary complex with BGN and MFAP2. Interacts with MFAP2 via divalent cations (calcium &gt; magnesium &gt; manganese) in a dose-dependent and saturating manner. Interacts with FBLN5 and FBN1. Forms a ternary complex with FBN1 and FBLN2 or FBLN5. Interacts with MFAP4 in a Ca (2+)-dependent manner; this interaction promotes ELN self-assembly. Interacts with EFEMP2 with moderate affinity. Elastin is formed through the cross-linking of its soluble precursor tropoelastin. Cross-linking is initiated through the action of lysyl oxidase on exposed lysines to form allysine. Subsequent spontaneous condensation reactions with other allysine or unmodified lysine residues result in various bi-, tri-, and tetrafunctional cross-links. The most abundant cross-links in mature elastin fibers are lysinonorleucine, allysine aldol, desmosine, and isodesmosine. In terms of processing, hydroxylation on proline residues within the sequence motif, GXPG, is most likely to be 4-hydroxy as this fits the requirement for 4-hydroxylation in vertebrates.

The protein localises to the secreted. Its subcellular location is the extracellular space. It is found in the extracellular matrix. Its function is as follows. Major structural protein of tissues such as aorta and nuchal ligament, which must expand rapidly and recover completely. Molecular determinant of the late arterial morphogenesis, stabilizing arterial structure by regulating proliferation and organization of vascular smooth muscle. The polypeptide is Elastin (Eln) (Rattus norvegicus (Rat)).